A 42-amino-acid polypeptide reads, in one-letter code: uncharacterized protein (42 aa).

Residues 18 to 38 (VGAISLTVMMILFFIAIVWFL) traverse the membrane as a helical segment.

It localises to the host membrane. This is an uncharacterized protein from His1 virus (isolate Australia/Victoria) (His1V).